The chain runs to 450 residues: Bifunctional apoptosis regulator (450 aa).

The tract at residues 1–20 (MEEPQKSYVNTMDLERDEPL) is disordered. Topologically, residues 1–140 (MEEPQKSYVN…PNTGRANQQM (140 aa)) are cytoplasmic. An RING-type zinc finger spans residues 34 to 74 (CHCCYDILVNPTTLNCGHSFCRHCLALWWASSKKTECPECR). A helical transmembrane segment spans residues 141-161 (GGGFFSGVLTALTGVAVVLLV). Residues 162–331 (YHWSSRESEH…KEPTWKQWRE (170 aa)) lie on the Lumenal side of the membrane. The SAM domain occupies 182-249 (WTAEEVVLWL…LMELERVKAL (68 aa)). An N-linked (GlcNAc...) asparagine glycan is attached at asparagine 232. A helical transmembrane segment spans residues 332-352 (FLVKYSFLPYQLIAEFAWDWL). The Cytoplasmic portion of the chain corresponds to 353–360 (EVHYWTSR). A helical membrane pass occupies residues 361–381 (FLIINAMLLSVLELFSFWRIW). Residues 382 to 404 (SRSELKTVPQRMWSHFWKVSTQG) lie on the Lumenal side of the membrane. Residues 405–425 (LFVAMFWPLIPQFVCNCLFYW) traverse the membrane as a helical segment. Residues 426-450 (ALYFNPIINIDLVVKELRRLETQVL) lie on the Cytoplasmic side of the membrane.

In terms of assembly, interacts with CASP8, BCL2 and BCL2L1 through SAM domain and also with HIP1, IFT57, ESRRBL1 and BCAP31. Interacts with NGFR; this interaction inhibits NF-kappa-B and JNK-related signaling pathways. Mediates RING-dependent self-ubiquitination leading to proteasomal degradation. As to expression, expressed highly in brain, moderately in small intestine, weakly in testes and only faintly in liver and skeletal muscle. Not expressed in heart, kidney, lung and spleen.

The protein resides in the endoplasmic reticulum membrane. It catalyses the reaction S-ubiquitinyl-[E2 ubiquitin-conjugating enzyme]-L-cysteine + [acceptor protein]-L-lysine = [E2 ubiquitin-conjugating enzyme]-L-cysteine + N(6)-ubiquitinyl-[acceptor protein]-L-lysine.. In terms of biological role, membrane-bound E3 ubiquitin ligase that plays a role in several processes including apoptosis regulation or reticulum endoplasmic stress. Has anti-apoptotic activity, both for apoptosis triggered via death-receptors and via mitochondrial factors. Contributes to the dynamic control of IRE1/ERN1 signaling during ER stress by inducing BAX inhibitor 1/TMBIM6 proteasomal degradation. Promotes the activation of TGF-beta signaling by mediating the 'Lys-63'-linked ubiquitination of TGFBR1 which is critical to activate the pathway. Together with NGFR, negatively regulates NF-kappa-B and JNK-related signaling pathways. Promotes the proteasome-mediated degradation of PNPLA3, a protein involveld in lipid metabolism. In Homo sapiens (Human), this protein is Bifunctional apoptosis regulator (BFAR).